Consider the following 143-residue polypeptide: Small ribosomal subunit protein uS12 (143 aa).

Residues 1-20 (MGKCRGLRTARKLRSHRRDH) show a composition bias toward basic residues. Positions 1 to 26 (MGKCRGLRTARKLRSHRRDHKWHDKQ) are disordered. Residue lysine 37 forms a Glycyl lysine isopeptide (Lys-Gly) (interchain with G-Cter in SUMO2) linkage. Residue lysine 54 is modified to N6-succinyllysine. Proline 62 bears the 3-hydroxyproline mark. Lysine 135 carries the N6-acetyllysine modification.

This sequence belongs to the universal ribosomal protein uS12 family. In terms of assembly, component of the 40S small ribosomal subunit. Part of the small subunit (SSU) processome, composed of more than 70 proteins and the RNA chaperone small nucleolar RNA (snoRNA) U3. As to quaternary structure, (Microbial infection) Interacts with the African swine fever virus (ASFV) ubiquitin-conjugating enzyme UBCv1; this interaction probably plays a role in the viral regulation of host protein synthesis. In terms of processing, hydroxylation at Pro-62 affects translation termination efficiency.

It is found in the cytoplasm. The protein resides in the cytosol. It localises to the rough endoplasmic reticulum. Its subcellular location is the nucleus. The protein localises to the nucleolus. Its function is as follows. Component of the ribosome, a large ribonucleoprotein complex responsible for the synthesis of proteins in the cell. The small ribosomal subunit (SSU) binds messenger RNAs (mRNAs) and translates the encoded message by selecting cognate aminoacyl-transfer RNA (tRNA) molecules. The large subunit (LSU) contains the ribosomal catalytic site termed the peptidyl transferase center (PTC), which catalyzes the formation of peptide bonds, thereby polymerizing the amino acids delivered by tRNAs into a polypeptide chain. The nascent polypeptides leave the ribosome through a tunnel in the LSU and interact with protein factors that function in enzymatic processing, targeting, and the membrane insertion of nascent chains at the exit of the ribosomal tunnel. Plays an important role in translational accuracy. Part of the small subunit (SSU) processome, first precursor of the small eukaryotic ribosomal subunit. During the assembly of the SSU processome in the nucleolus, many ribosome biogenesis factors, an RNA chaperone and ribosomal proteins associate with the nascent pre-rRNA and work in concert to generate RNA folding, modifications, rearrangements and cleavage as well as targeted degradation of pre-ribosomal RNA by the RNA exosome. The sequence is that of Small ribosomal subunit protein uS12 (RPS23) from Sus scrofa (Pig).